Consider the following 639-residue polypeptide: 3D-(3,5/4)-trihydroxycyclohexane-1,2-dione hydrolase (639 aa).

A thiamine diphosphate-binding site is contributed by Glu-65. The tract at residues 437–517 (SLPGDLQRMW…INIILFDNSG (81 aa)) is thiamine pyrophosphate binding. Residues Asp-488 and Asn-515 each contribute to the Mg(2+) site.

This sequence belongs to the TPP enzyme family. Mg(2+) is required as a cofactor. Thiamine diphosphate serves as cofactor.

It catalyses the reaction 3D-3,5/4-trihydroxycyclohexane-1,2-dione + H2O = 5-deoxy-D-glucuronate + H(+). Its pathway is polyol metabolism; myo-inositol degradation into acetyl-CoA; acetyl-CoA from myo-inositol: step 3/7. In terms of biological role, involved in the cleavage of the C1-C2 bond of 3D-(3,5/4)-trihydroxycyclohexane-1,2-dione (THcHDO) to yield 5-deoxy-glucuronate (5DG). This chain is 3D-(3,5/4)-trihydroxycyclohexane-1,2-dione hydrolase, found in Geobacillus thermodenitrificans (strain NG80-2).